The primary structure comprises 622 residues: Dehydrogenase mpl7 (622 aa).

Residues 23-24, 44-45, and 102-105 contribute to the FAD site; these read TA, EA, and NFMS. His554 acts as the Proton acceptor in catalysis. FAD is bound by residues Ala582 and 593 to 594; that span reads IM.

It belongs to the GMC oxidoreductase family. As to quaternary structure, homodimer. The cofactor is FAD.

It functions in the pathway mycotoxin biosynthesis. Dehydrogenase; part of the gene cluster that mediates the biosynthesis of the mycotoxin citrinin, a hepato-nephrotoxic compound to humans due to inhibition of respiration complex III. The pathway begins with the synthesis of a keto-aldehyde intermediate by the citrinin PKS (pksCT) from successive condensations of 4 malonyl-CoA units, presumably with a simple acetyl-CoA starter unit. Release of the keto-aldehyde intermediate is consistent with the presence of the C-terminal reductive release domain. Mp11 collaborates with pksCT by catalyzing the hydrolysis of ACP-bound acyl intermediates to free the ACP from stalled intermediates. Mpl2 then catalyzes the oxidation of the C-12 methyl of the ketone intermediate to an alcohol intermediate which is further oxidized by the oxidoreductase mpl7 to produce a bisaldehyde intermediate. The fourth catalytic step is catalyzed by the mpl4 aldehyde dehydrogenase. The final transformation is the reduction of C-3 by mpl6 to provide the chemically stable citrinin nucleus. This is Dehydrogenase mpl7 from Monascus purpureus (Red mold).